A 177-amino-acid chain; its full sequence is Peptide deformylase (177 aa).

2 residues coordinate Fe cation: Cys99 and His141. Glu142 is a catalytic residue. Fe cation is bound at residue His145.

This sequence belongs to the polypeptide deformylase family. The cofactor is Fe(2+).

The catalysed reaction is N-terminal N-formyl-L-methionyl-[peptide] + H2O = N-terminal L-methionyl-[peptide] + formate. Its function is as follows. Removes the formyl group from the N-terminal Met of newly synthesized proteins. Requires at least a dipeptide for an efficient rate of reaction. N-terminal L-methionine is a prerequisite for activity but the enzyme has broad specificity at other positions. The sequence is that of Peptide deformylase from Rhizorhabdus wittichii (strain DSM 6014 / CCUG 31198 / JCM 15750 / NBRC 105917 / EY 4224 / RW1) (Sphingomonas wittichii).